Here is a 151-residue protein sequence, read N- to C-terminus: Phosphoribosyl-AMP cyclohydrolase (151 aa).

D94 is a binding site for Mg(2+). C95 is a binding site for Zn(2+). D96 and D98 together coordinate Mg(2+). Residues C112 and C119 each coordinate Zn(2+).

The protein belongs to the PRA-CH family. In terms of assembly, homodimer. It depends on Mg(2+) as a cofactor. Requires Zn(2+) as cofactor.

It is found in the cytoplasm. The catalysed reaction is 1-(5-phospho-beta-D-ribosyl)-5'-AMP + H2O = 1-(5-phospho-beta-D-ribosyl)-5-[(5-phospho-beta-D-ribosylamino)methylideneamino]imidazole-4-carboxamide. It functions in the pathway amino-acid biosynthesis; L-histidine biosynthesis; L-histidine from 5-phospho-alpha-D-ribose 1-diphosphate: step 3/9. Catalyzes the hydrolysis of the adenine ring of phosphoribosyl-AMP. The sequence is that of Phosphoribosyl-AMP cyclohydrolase from Rhodopseudomonas palustris (strain TIE-1).